A 90-amino-acid polypeptide reads, in one-letter code: Protein Z600 (90 aa).

2 positions are modified to phosphothreonine: Thr22 and Thr48. The interval 46-65 is disordered; that stretch reads PATPSSSGHGKFQTELKKRR.

As to quaternary structure, component of the Frs-CycA-Cdk1 complex composed of Z600, CycA and Cdk1. Interacts preferentially with CycA (via C-terminus) but is also able to interact (via C-terminus) with CycE (via C-terminus).

It localises to the nucleus. Its function is as follows. Cell cycle regulator that is involved in modulating and adjusting cell proliferation according to the requirements of the developmental program. Interacts with mitotic Cdk1-cyclin complexes to inhibit mitotic entry at the G2/M transition. Likely to function by binding to the hydrophobic patch of cyclins to interfere with the interaction between the complex and certain Cdk1 substrates. At the mid-blastula transition, involved in the cell cycle arrest in G2 of cycle 14 by delaying mitosis and thus reducing cell proliferation allowing cell fate specification and morphogenesis to take place. Acts downstream or in parallel to the checkpoint regulator grp which is also required for the cell cycle pause at cycle 14. During gastrulation, delays mitosis in the ventral region of the embryonic mesoderm thus allowing invagination to be completed before cell division takes place. This Drosophila melanogaster (Fruit fly) protein is Protein Z600.